Here is an 862-residue protein sequence, read N- to C-terminus: uncharacterized protein (862 aa).

A signal peptide spans 1 to 25 (MKPRPYSVFLFLHIVFYSLLSAVNG). The Lumenal segment spans residues 26-61 (SPSLDYFETCSNFVPRAGIPTFSPYAVIKNFDEVNR). Residues 62 to 82 (MYYIQVVGNLSGVITIVGGNG) form a helical membrane-spanning segment. Topologically, residues 83–187 (SHIHAASVYS…STTLYYFYPV (105 aa)) are cytoplasmic. A helical membrane pass occupies residues 188 to 208 (ISYLVVVSLAYVSFSIIYALF). Topologically, residues 209–230 (LNPWTGSLDPFKSIFNFNMDPD) are lumenal. Residues 231–250 (ALRLTSLGFFDFVQYLQFAV) form a helical membrane-spanning segment. Residues 251 to 256 (STAQVS) lie on the Cytoplasmic side of the membrane. A helical transmembrane segment spans residues 257–277 (VMFPKFYINIMAALSWGTALF). The Lumenal portion of the chain corresponds to 278-329 (RFPIFSEPAEYQFADFADLSVASSSYADYLPKSYGMYSFLDSIGIGTACWLP). The chain crosses the membrane as a helical span at residues 330 to 350 (FLIVMVIYLFAALFVALLVIF). Residues 351-372 (LKWLMSRIFNETIAETRWDTWS) are Cytoplasmic-facing. Residues 373–393 (FIAGSLIRLYFLTYFPTVAYM) traverse the membrane as a helical segment. Residues 394-404 (SFQFVAPPTGY) are Lumenal-facing. The chain crosses the membrane as a helical span at residues 405-425 (EIIPVLWFIFFGIFIPVYLYM). At 426–457 (NLAFVEPSSKLLEDQTYLHLFGSIYNSFREER) the chain is on the cytoplasmic side. A helical transmembrane segment spans residues 458–480 (VMFWIFPIAVQFMRGITVGVIGS). Topologically, residues 481-483 (SGS) are lumenal. The helical transmembrane segment at 484-503 (AQLAIFFILEVANVVAYAYV) threads the bilayer. The Cytoplasmic segment spans residues 504–514 (RPHFPQTSMNT). A helical membrane pass occupies residues 515–535 (LNTFISTMRLITVILMIPLDP). The Lumenal segment spans residues 536-545 (RLKVLGISRD). A helical membrane pass occupies residues 546 to 566 (LLAYAILFIHIMVCILFLLLS). The Cytoplasmic segment spans residues 567 to 862 (TQRFMEVSAR…AESAWSIPHP (296 aa)). The span at 668 to 686 (QASSLVPSKNNTASSSSLM) shows a compositional bias: polar residues. 2 disordered regions span residues 668-717 (QASS…SVRK) and 815-862 (VLRS…IPHP). Positions 689 to 700 (SPVTPSSPYSTS) are enriched in low complexity. Positions 834 to 850 (EPSRDEQYSMERKKTDD) are enriched in basic and acidic residues.

It belongs to the transient receptor potential (TRP) ion channel family.

It localises to the cytoplasm. The protein resides in the golgi apparatus membrane. This is an uncharacterized protein from Schizosaccharomyces pombe (strain 972 / ATCC 24843) (Fission yeast).